Consider the following 238-residue polypeptide: Putative type I specificity subunit S.MpnORF201P (238 aa).

Belongs to the type-I restriction system S methylase family. As to quaternary structure, the methyltransferase is composed of M and S polypeptides.

The specificity (S) subunit of a type I methyltransferase (MTase); this subunit dictates DNA sequence specificity. The single R subunit has multiple frameshifts and is probably not expressed. In Mycoplasma pneumoniae (strain ATCC 29342 / M129 / Subtype 1) (Mycoplasmoides pneumoniae), this protein is Putative type I specificity subunit S.MpnORF201P.